Here is a 997-residue protein sequence, read N- to C-terminus: NLR family CARD domain-containing protein 4 (997 aa).

The CARD domain occupies 1 to 88 (MDLIRKNYAE…FFYEDLIGQR (88 aa)). Residues 95 to 300 (EEDLENLADH…RCGALIAETS (206 aa)) form a nucleotide-binding domain (NBD) region. The region spanning 165–478 (SPCVIEGEAG…VTKGEDFLNK (314 aa)) is the NACHT domain. 171-178 (GEAGKGKT) lines the ATP pocket. The interval 358 to 465 (MNTQTTLFST…RLSQLLSSED (108 aa)) is winged-helix domain (WHD). 12 LRR repeats span residues 550–570 (LFSE…HIEF), 629–652 (NQSI…DIKY), 708–731 (MTEM…LLEG), 735–758 (LVGL…TLAE), 760–785 (ILSL…ESIA), 797–820 (ELKL…LYSL), 821–843 (SHIE…SVEE), 851–875 (LDAI…VLPT), 884–905 (ELAF…SYIN), 908–935 (FENL…ILQY), 937–958 (PNLT…DLVR), and 972–994 (TMEL…AKNM).

It localises to the cytoplasm. The protein resides in the cytosol. In terms of biological role, key component of inflammasomes that indirectly senses specific proteins from pathogenic bacteria and fungi and responds by assembling an inflammasome complex that promotes caspase-1 activation, cytokine production and macrophage pyroptosis. In Xenopus tropicalis (Western clawed frog), this protein is NLR family CARD domain-containing protein 4 (nlrc4).